Reading from the N-terminus, the 518-residue chain is Zinc finger protein 776 (518 aa).

Positions 14 to 89 (VTFEDVAVNF…HWTGVCTKKV (76 aa)) constitute a KRAB domain. Glycyl lysine isopeptide (Lys-Gly) (interchain with G-Cter in SUMO2) cross-links involve residues K171, K196, K220, and K247. Residues 208-230 (YICGESTIPFSNKHSLVLHQRLL) form a C2H2-type 1; degenerate zinc finger. A C2H2-type 2; degenerate zinc finger spans residues 236–258 (YVCSDSGKFTSKSNSFNNHQGVR). C2H2-type zinc fingers lie at residues 264–286 (YQCG…QRVH), 292–314 (YECG…QRVH), 320–342 (YECD…QRVH), 348–370 (YQCG…QRVH), 376–398 (FECT…QRVH), 404–426 (YECK…QRVH), and 432–454 (YECR…QQIH). A C2H2-type 10; degenerate zinc finger spans residues 460–482 (HECGECGKCFHQKGSLIRHQQIH). A C2H2-type 11 zinc finger spans residues 488-510 (HECGECGKCFRQKGNLIKHQRVH).

This sequence belongs to the krueppel C2H2-type zinc-finger protein family.

It localises to the nucleus. May be involved in transcriptional regulation. This is Zinc finger protein 776 (ZNF776) from Homo sapiens (Human).